The chain runs to 208 residues: N-(5'-phosphoribosyl)anthranilate isomerase (208 aa).

The protein belongs to the TrpF family.

The enzyme catalyses N-(5-phospho-beta-D-ribosyl)anthranilate = 1-(2-carboxyphenylamino)-1-deoxy-D-ribulose 5-phosphate. It functions in the pathway amino-acid biosynthesis; L-tryptophan biosynthesis; L-tryptophan from chorismate: step 3/5. This chain is N-(5'-phosphoribosyl)anthranilate isomerase, found in Nitrosospira multiformis (strain ATCC 25196 / NCIMB 11849 / C 71).